The following is a 438-amino-acid chain: Glutamyl-tRNA reductase (438 aa).

Substrate contacts are provided by residues 49 to 52 (TCNR), Ser-109, 114 to 116 (EGQ), and Gln-120. Catalysis depends on Cys-50, which acts as the Nucleophile. Residue 198 to 203 (GAGRMS) coordinates NADP(+).

It belongs to the glutamyl-tRNA reductase family. In terms of assembly, homodimer.

It catalyses the reaction (S)-4-amino-5-oxopentanoate + tRNA(Glu) + NADP(+) = L-glutamyl-tRNA(Glu) + NADPH + H(+). Its pathway is porphyrin-containing compound metabolism; protoporphyrin-IX biosynthesis; 5-aminolevulinate from L-glutamyl-tRNA(Glu): step 1/2. It participates in porphyrin-containing compound metabolism; chlorophyll biosynthesis. In terms of biological role, catalyzes the NADPH-dependent reduction of glutamyl-tRNA(Glu) to glutamate 1-semialdehyde (GSA). The sequence is that of Glutamyl-tRNA reductase from Synechococcus sp. (strain WH7803).